The primary structure comprises 383 residues: NifS-like protein (383 aa).

Pyridoxal 5'-phosphate contacts are provided by residues 58–59 and 184–186; these read SE and SLN.

The protein belongs to the class-V pyridoxal-phosphate-dependent aminotransferase family. NifS/IscS subfamily. The cofactor is pyridoxal 5'-phosphate.

The protein resides in the virion. The polypeptide is NifS-like protein (African swine fever virus (isolate Pig/Kenya/KEN-50/1950) (ASFV)).